The chain runs to 562 residues: F-box only protein 33 (562 aa).

The region spanning 68 to 114 (AAGAASLPSELIVHIFSFLPAPDRLRASASCSHWRECLFYPALWPQL) is the F-box domain. Gly residues predominate over residues 155 to 173 (GGGPGDGGSGGGTDTGTGG). The tract at residues 155-176 (GGGPGDGGSGGGTDTGTGGEDG) is disordered.

In terms of assembly, part of the SCF (SKP1-CUL1-F-box) E3 ubiquitin-protein ligase complex SCF(FBXO33) formed of CUL1, SKP1, RBX1 and FBXO33. Interacts via its N-terminus with YBX1 CSD domain. Directly interacts with SKP1 and CUL1.

It participates in protein modification; protein ubiquitination. In terms of biological role, substrate recognition component of a SCF (SKP1-CUL1-F-box protein) E3 ubiquitin-protein ligase complex which mediates the ubiquitination and subsequent proteasomal degradation of target proteins. Probably recognizes and binds to phosphorylated target proteins. Recognizes YBX1. In Mus musculus (Mouse), this protein is F-box only protein 33 (Fbxo33).